The chain runs to 283 residues: Secretory carrier-associated membrane protein 2 (283 aa).

A disordered region spans residues 1 to 47 (MARHDPNPFADEEINPFANHTSVPPASNSYLKPLPPEPYDRGATVDI). Residues 1–123 (MARHDPNPFA…LQKIQYVAFT (123 aa)) are Cytoplasmic-facing. Polar residues predominate over residues 18–30 (ANHTSVPPASNSY). Positions 50-87 (DSGNDLRAKEMELQAKENELKRKEQELKRREDAIARTG) form a coiled coil. 4 helical membrane-spanning segments follow: residues 124 to 144 (TLLGLVGCLLWNIVAVTVAWI), 151 to 171 (IWLLSIIYFLAGVPGAYVLWY), 186 to 206 (FGAFFFFYVFHIAFCGFAAVA), and 234 to 254 (IMYFIGAGFFCIETLLNIWVI). Residues 255 to 283 (QQVYAYFRGSGKAAEMKREATKSTLMRAL) lie on the Cytoplasmic side of the membrane.

Belongs to the SCAMP family.

The protein resides in the cell membrane. Its subcellular location is the cytoplasmic vesicle. It localises to the secretory vesicle membrane. Probably involved in membrane trafficking. This is Secretory carrier-associated membrane protein 2 (SCAMP2) from Arabidopsis thaliana (Mouse-ear cress).